Consider the following 205-residue polypeptide: Ras-related protein RABB1a (205 aa).

Position 13 to 20 (13 to 20) interacts with GTP; it reads GDTGVGKS. Residues 35 to 43 carry the Effector region motif; it reads HDLTIGVEF. GTP is bound by residues 61-65, 119-122, and 149-150; these read DTAGQ, NKCD, and SA. Residues 179 to 205 form a disordered region; it reads ANEPGITPGPFGGKDASSSQQRRGCCG. Over residues 194–205 the composition is skewed to polar residues; that stretch reads ASSSQQRRGCCG. 2 S-geranylgeranyl cysteine lipidation sites follow: cysteine 203 and cysteine 204.

Belongs to the small GTPase superfamily. Rab family.

The protein resides in the cell membrane. Its function is as follows. Intracellular vesicle trafficking and protein transport. This is Ras-related protein RABB1a (RABB1A) from Arabidopsis thaliana (Mouse-ear cress).